Consider the following 757-residue polypeptide: Polyribonucleotide nucleotidyltransferase (757 aa).

Residues aspartate 487 and aspartate 493 each contribute to the Mg(2+) site. Residues 554–613 (PRITTVRVKPDQIRLIIGPGGKTIKGIVDQTGVAIDVEDDGTVNVASADSDAVKRALDII) form the KH domain. Positions 623-691 (GATYKGTVKR…REGKIRLSRR (69 aa)) constitute an S1 motif domain. The segment at 697 to 757 (PEGEEGDRAR…PPRERRERRS (61 aa)) is disordered. 2 stretches are compositionally biased toward basic and acidic residues: residues 702–711 (GDRARERMAQ) and 719–757 (PRRD…ERRS).

This sequence belongs to the polyribonucleotide nucleotidyltransferase family. The cofactor is Mg(2+).

Its subcellular location is the cytoplasm. The catalysed reaction is RNA(n+1) + phosphate = RNA(n) + a ribonucleoside 5'-diphosphate. Involved in mRNA degradation. Catalyzes the phosphorolysis of single-stranded polyribonucleotides processively in the 3'- to 5'-direction. This Sorangium cellulosum (strain So ce56) (Polyangium cellulosum (strain So ce56)) protein is Polyribonucleotide nucleotidyltransferase.